Here is a 1082-residue protein sequence, read N- to C-terminus: Carbamoyl phosphate synthase large chain (1082 aa).

The segment at 1–401 is carboxyphosphate synthetic domain; sequence MPKDKALKKV…ALLKAVRSLE (401 aa). ATP contacts are provided by Arg129, Arg169, Gly175, Gly176, Lys208, Val210, Glu215, Gly241, Ile242, His243, Gln284, and Glu298. In terms of domain architecture, ATP-grasp 1 spans 133–327; that stretch reads KNMCLEIGEP…IAKVATKVAV (195 aa). Mg(2+)-binding residues include Gln284, Glu298, and Asn300. Residues Gln284, Glu298, and Asn300 each coordinate Mn(2+). An oligomerization domain region spans residues 402–561; that stretch reads TGVTGMNLPE…YSTYEDEDEA (160 aa). The tract at residues 562-944 is carbamoyl phosphate synthetic domain; it reads EPQAVRKVVV…ALYKACLSAG (383 aa). Residues 686–876 form the ATP-grasp 2 domain; the sequence is DQLVAELGIP…MVNLATRICL (191 aa). ATP is bound by residues Arg722, Lys761, Leu763, Glu767, Gly792, Ile793, His794, Ser795, Gln835, and Glu847. 3 residues coordinate Mg(2+): Gln835, Glu847, and Asn849. Mn(2+) is bound by residues Gln835, Glu847, and Asn849. An MGS-like domain is found at 945–1082; that stretch reads YTLPSSGKAV…PLIPLQEYVS (138 aa). Residues 945-1082 form an allosteric domain region; sequence YTLPSSGKAV…PLIPLQEYVS (138 aa).

It belongs to the CarB family. Composed of two chains; the small (or glutamine) chain promotes the hydrolysis of glutamine to ammonia, which is used by the large (or ammonia) chain to synthesize carbamoyl phosphate. Tetramer of heterodimers (alpha,beta)4. Mg(2+) serves as cofactor. Mn(2+) is required as a cofactor.

The enzyme catalyses hydrogencarbonate + L-glutamine + 2 ATP + H2O = carbamoyl phosphate + L-glutamate + 2 ADP + phosphate + 2 H(+). The catalysed reaction is hydrogencarbonate + NH4(+) + 2 ATP = carbamoyl phosphate + 2 ADP + phosphate + 2 H(+). It functions in the pathway amino-acid biosynthesis; L-arginine biosynthesis; carbamoyl phosphate from bicarbonate: step 1/1. The protein operates within pyrimidine metabolism; UMP biosynthesis via de novo pathway; (S)-dihydroorotate from bicarbonate: step 1/3. Large subunit of the glutamine-dependent carbamoyl phosphate synthetase (CPSase). CPSase catalyzes the formation of carbamoyl phosphate from the ammonia moiety of glutamine, carbonate, and phosphate donated by ATP, constituting the first step of 2 biosynthetic pathways, one leading to arginine and/or urea and the other to pyrimidine nucleotides. The large subunit (synthetase) binds the substrates ammonia (free or transferred from glutamine from the small subunit), hydrogencarbonate and ATP and carries out an ATP-coupled ligase reaction, activating hydrogencarbonate by forming carboxy phosphate which reacts with ammonia to form carbamoyl phosphate. The protein is Carbamoyl phosphate synthase large chain of Desulforudis audaxviator (strain MP104C).